The following is a 350-amino-acid chain: Phosphotriesterase-related protein (350 aa).

A divalent metal cation-binding residues include His22, His24, Glu169, His201, His230, and Asp298.

It belongs to the metallo-dependent hydrolases superfamily. Phosphotriesterase family. Requires a divalent metal cation as cofactor.

This Drosophila melanogaster (Fruit fly) protein is Phosphotriesterase-related protein.